The chain runs to 137 residues: Large ribosomal subunit protein uL16 (137 aa).

It belongs to the universal ribosomal protein uL16 family. As to quaternary structure, part of the 50S ribosomal subunit.

In terms of biological role, binds 23S rRNA and is also seen to make contacts with the A and possibly P site tRNAs. This chain is Large ribosomal subunit protein uL16, found in Endomicrobium trichonymphae.